The sequence spans 156 residues: Small ribosomal subunit protein uS7 (156 aa).

This sequence belongs to the universal ribosomal protein uS7 family. In terms of assembly, part of the 30S ribosomal subunit. Contacts proteins S9 and S11.

Its function is as follows. One of the primary rRNA binding proteins, it binds directly to 16S rRNA where it nucleates assembly of the head domain of the 30S subunit. Is located at the subunit interface close to the decoding center, probably blocks exit of the E-site tRNA. In Lactobacillus delbrueckii subsp. bulgaricus (strain ATCC 11842 / DSM 20081 / BCRC 10696 / JCM 1002 / NBRC 13953 / NCIMB 11778 / NCTC 12712 / WDCM 00102 / Lb 14), this protein is Small ribosomal subunit protein uS7.